Consider the following 311-residue polypeptide: Pyrimidine-specific ribonucleoside hydrolase RihA (311 aa).

The active site involves His-240.

The protein belongs to the IUNH family. RihA subfamily.

Its function is as follows. Hydrolyzes cytidine or uridine to ribose and cytosine or uracil, respectively. The sequence is that of Pyrimidine-specific ribonucleoside hydrolase RihA from Salmonella arizonae (strain ATCC BAA-731 / CDC346-86 / RSK2980).